The primary structure comprises 274 residues: 2,3,4,5-tetrahydropyridine-2,6-dicarboxylate N-succinyltransferase (274 aa).

The substrate site is built by arginine 106 and aspartate 143.

It belongs to the transferase hexapeptide repeat family. In terms of assembly, homotrimer.

The protein resides in the cytoplasm. It carries out the reaction (S)-2,3,4,5-tetrahydrodipicolinate + succinyl-CoA + H2O = (S)-2-succinylamino-6-oxoheptanedioate + CoA. The protein operates within amino-acid biosynthesis; L-lysine biosynthesis via DAP pathway; LL-2,6-diaminopimelate from (S)-tetrahydrodipicolinate (succinylase route): step 1/3. The sequence is that of 2,3,4,5-tetrahydropyridine-2,6-dicarboxylate N-succinyltransferase from Rickettsia felis (strain ATCC VR-1525 / URRWXCal2) (Rickettsia azadi).